We begin with the raw amino-acid sequence, 270 residues long: Dermonecrotic toxin LsaSicTox-alphaIB1av (270 aa).

The active site involves His2. Residues Glu22 and Asp24 each coordinate Mg(2+). His38 functions as the Nucleophile in the catalytic mechanism. 2 disulfide bridges follow: Cys42/Cys48 and Cys44/Cys187. Asp82 is a binding site for Mg(2+).

This sequence belongs to the arthropod phospholipase D family. Class II subfamily. It depends on Mg(2+) as a cofactor. In terms of tissue distribution, expressed by the venom gland.

It is found in the secreted. It catalyses the reaction an N-(acyl)-sphingosylphosphocholine = an N-(acyl)-sphingosyl-1,3-cyclic phosphate + choline. It carries out the reaction an N-(acyl)-sphingosylphosphoethanolamine = an N-(acyl)-sphingosyl-1,3-cyclic phosphate + ethanolamine. The catalysed reaction is a 1-acyl-sn-glycero-3-phosphocholine = a 1-acyl-sn-glycero-2,3-cyclic phosphate + choline. The enzyme catalyses a 1-acyl-sn-glycero-3-phosphoethanolamine = a 1-acyl-sn-glycero-2,3-cyclic phosphate + ethanolamine. Functionally, dermonecrotic toxins cleave the phosphodiester linkage between the phosphate and headgroup of certain phospholipids (sphingolipid and lysolipid substrates), forming an alcohol (often choline) and a cyclic phosphate. This toxin acts on sphingomyelin (SM). It may also act on ceramide phosphoethanolamine (CPE), lysophosphatidylcholine (LPC) and lysophosphatidylethanolamine (LPE), but not on lysophosphatidylserine (LPS), and lysophosphatidylglycerol (LPG). It acts by transphosphatidylation, releasing exclusively cyclic phosphate products as second products. Induces dermonecrosis, hemolysis, increased vascular permeability, edema, inflammatory response, and platelet aggregation. The polypeptide is Dermonecrotic toxin LsaSicTox-alphaIB1av (Loxosceles sabina (Tucson recluse spider)).